The chain runs to 843 residues: Protein piwi (843 aa).

The Nuclear localization signal motif lies at 1–12; the sequence is MADDQGRGRRRP. The interval 1-76 is disordered; that stretch reads MADDQGRGRR…TERKPWGDQY (76 aa). An interaction with CBX5 and papi region spans residues 1 to 257; that stretch reads MADDQGRGRR…ILLGTEITHK (257 aa). 4 positions are modified to symmetric dimethylarginine: arginine 7, arginine 9, arginine 10, and arginine 11. Residues 41–72 are compositionally biased toward basic and acidic residues; the sequence is PRADPRIEASRERRALEEAPRREGGPTERKPW. Residues 263–372 form the PAZ domain; sequence TIYDIMRRCS…LIPELCRVTG (110 aa). The Piwi domain maps to 538–829; the sequence is LILCLVPNDN…LATLVGTNLH (292 aa). Glutamine 589 provides a ligand contact to Mg(2+). Catalysis depends on residues aspartate 614 and aspartate 685. Residue leucine 843 participates in Mg(2+) binding.

The protein belongs to the argonaute family. Piwi subfamily. In terms of assembly, in the ovaries, part of a complex composed of at least Panx, nxf2, piwi and Nxt1. The complex is knowns as Panx-induced co-transcriptional silencing (PICTS) complex, Panx-nxf2-dependent TAP/p15 silencing (Pandas complex), SFiNX (silencing factor interacting nuclear export variant) or piwi-Panx-nxf2-p15 (PPNP) complex. Interacts with vas; this interaction is RNA-independent. Interacts with Dcr-1 and Fmr1; these interactions occur in polar granules. Interacts (via N-terminal region) with CBX5 (via chromoshadow domain). Forms a complex with Hsp83 and Hop; probably Hop mediates the interaction between piwi and Hsp83. Forms a complex with Yb body components armi and fs(1)Yb; this interaction is required for proper piRNA loading and nuclear localization of piwi. Interaction of Piwi and fs(1)Yb is likely to occur via armi. Interacts (via the N-terminal region when unmethylated or symmetrically methylated at Arg-10) with papi (via Tudor domain). Interacts with vret. Interacts with Panx. Interacts with arx. Interacts with Tudor-SN. Interacts with Nup358 (via N-terminus). Associates with the nuclear pore complex via interaction with Elys. Interacts with thoc5; the interaction might be partly RNA-mediated. Interacts with xmas-2. Post-translationally, symmetrically dimethylated, most likely by csul. Methylation at Arg-10 enhances binding to papi whereas methylation at Arg-7, Arg-9 or Arg-11 reduces binding affinity to papi. In terms of processing, phosphorylated on serine and tyrosine residues in an Hsp83-dependent manner. As to expression, expressed in ovaries (at protein level). Expressed somatically in ovariole terminal filament cells, epithelial sheath cells, cap cells and follicle cells (at protein level). Expressed in nurse cells and oocytes in developing egg chambers (at protein level). In embryos, accumulates in pole cells (at protein level). In larval and adult testis, expressed in a germinal proliferative center at the apical tip containing somatic hub cells and mitotically dividing germ stem cells (at protein level).

It localises to the cytoplasm. It is found in the nucleus. The protein resides in the nucleoplasm. Its subcellular location is the chromosome. Functionally, acts via the piwi-interacting RNA (piRNA) metabolic process, which mediates the repression of transposable elements during meiosis by forming complexes composed of piRNAs and Piwi proteins and governs the methylation and subsequent repression of transposons. Directly binds piRNAs, a class of 24 to 30 nucleotide RNAs that are generated by a Dicer-independent mechanism and are primarily derived from transposons and other repeated sequence elements. In ovarian somatic cells, mediates silencing of transposable elements at the transcriptional level in a mael-dependent manner. Involved in silencing of long terminal repeat (LTR) retrotransposons in male germline. In testis, regulates spermatogenesis together with Tudor-SN. In germ cells, mediates silencing at both transcriptional and post-transcriptional levels and is involved in the maintenance of populations of primary and secondary piRNAs. Piwi-mediated transcriptional silencing is accompanied by the formation of His3 trimethylated on 'Lys-10' (H3K9me3) associated euchromatin and heterochromatin. In ovary, associates predominantly with antisense piRNAs that contain uridine at their 5' end. Association with sense piRNAs is also observed but to a lesser extent. Mediates a somatic signaling mechanism required for the maintenance of germline stem cells to produce and maintain a daughter germline stem cell. It is not essential for the further differentiation of the committed daughter cell. Acts cell autonomously to promote germline stem cell division. Its role in stem cell maintenance does not seem to require nuclear localization. Required maternally for the posterior localization of osk and vas and for pole cell formation during oogenesis and early embryogenesis. Together with Hop and Hsp83, mediates canalization, also known as developmental robustness, likely via epigenetic silencing of existing genetic variants and suppression of transposon-induced new genetic variation. Shows RNA cleavage activity, although is not required for any of its known functions. In the ovaries, forms a complex with nxf2, Panx and Nxt1 which acts as effectors of cotranscriptional transposon silencing. The chain is Protein piwi from Drosophila melanogaster (Fruit fly).